The chain runs to 186 residues: Holliday junction branch migration complex subunit RuvA (186 aa).

Residues 1–63 are domain I; it reads MNDYINGLLH…DNVFKYYGFK (63 aa). The interval 64-137 is domain II; it reads NQLIRDLFEL…QKELFNNKIS (74 aa). A region of interest (flexible linker) is located at residue serine 137. The segment at 137–186 is domain III; sequence SDKKNKVITSLEKLGYKTKDIYKIIINIDEDMNIEDLTKYVLEQLSYLHN.

It belongs to the RuvA family. As to quaternary structure, homotetramer. Forms an RuvA(8)-RuvB(12)-Holliday junction (HJ) complex. HJ DNA is sandwiched between 2 RuvA tetramers; dsDNA enters through RuvA and exits via RuvB. An RuvB hexamer assembles on each DNA strand where it exits the tetramer. Each RuvB hexamer is contacted by two RuvA subunits (via domain III) on 2 adjacent RuvB subunits; this complex drives branch migration. In the full resolvosome a probable DNA-RuvA(4)-RuvB(12)-RuvC(2) complex forms which resolves the HJ.

Its subcellular location is the cytoplasm. Functionally, the RuvA-RuvB-RuvC complex processes Holliday junction (HJ) DNA during genetic recombination and DNA repair, while the RuvA-RuvB complex plays an important role in the rescue of blocked DNA replication forks via replication fork reversal (RFR). RuvA specifically binds to HJ cruciform DNA, conferring on it an open structure. The RuvB hexamer acts as an ATP-dependent pump, pulling dsDNA into and through the RuvAB complex. HJ branch migration allows RuvC to scan DNA until it finds its consensus sequence, where it cleaves and resolves the cruciform DNA. The polypeptide is Holliday junction branch migration complex subunit RuvA (Mycoplasma mycoides subsp. mycoides SC (strain CCUG 32753 / NCTC 10114 / PG1)).